The primary structure comprises 27 residues: Alpha-benincasin (27 aa).

Its function is as follows. Has weak antifungal activity toward C.comatus and P.piricola but not toward M.arachidicola. Inhibits cell-free translation in rabbit reticulocyte lysate system. This is Alpha-benincasin from Benincasa hispida (Wax gourd).